A 211-amino-acid polypeptide reads, in one-letter code: Ferritin heavy chain (211 aa).

The first 20 residues, 1–20 (MNSILLVFAGILAVCLPASA), serve as a signal peptide directing secretion. Residues 35-191 (ITMHRSCRNS…GKASTLKKLM (157 aa)) enclose the Ferritin-like diiron domain. C41 and C150 are joined by a disulfide. Fe cation contacts are provided by E52, E87, H90, E136, and Q173.

It belongs to the ferritin family. In terms of assembly, oligomer of 12 light (L) chains and 12 heavy (H) chains; L and H chains are disulfide-linked. The functional molecule forms a roughly spherical shell with a diameter of 12 nm and contains a central cavity into which the insoluble ferric iron core is deposited.

Its subcellular location is the golgi apparatus. It is found in the secreted. The enzyme catalyses 4 Fe(2+) + O2 + 4 H(+) = 4 Fe(3+) + 2 H2O. Stores iron in a soluble, non-toxic, readily available form. Important for iron homeostasis. Iron is taken up in the ferrous form and deposited as ferric hydroxides after oxidation. Ferritin is composed of a heavy (H) chain which is responsible for the oxidation and uptake of ferrous iron, and a light (L) chain which facilitates the nucleation of the ferrihydrite iron core. The sequence is that of Ferritin heavy chain from Trichoplusia ni (Cabbage looper).